The sequence spans 1336 residues: Coiled-coil and C2 domain-containing protein 2A (1336 aa).

2 disordered regions span residues 1–29 (MEAA…EQEV) and 70–97 (VEDC…QTFI). Positions 8-23 (KTAKKKRKTHTTRGYR) are enriched in basic residues. The segment covering 70–89 (VEDCQESDEDSGGELAEEPT) has biased composition (acidic residues). A coiled-coil region spans residues 136–156 (LSDLSELKDSQIRMLNRYQEQ). Positions 755–915 (PREPSGWSGH…LASRTFEGCI (161 aa)) constitute a C2 domain.

As to quaternary structure, probable component of the tectonic-like complex (also named MKS complex), composed of B9d1, B9d2, Cc2d2a, Mks1 and tctn. As to expression, expressed in the antennae of chordotonal neurons and male germ cells (at protein level).

It is found in the cytoplasm. Its subcellular location is the cytoskeleton. It localises to the cilium basal body. The protein localises to the microtubule organizing center. The protein resides in the centrosome. It is found in the centriole. Its function is as follows. Probable component of the tectonic-like complex (also named MKS complex), a complex localized at the transition zone of primary cilia. Required for ciliary structure and function. In Drosophila melanogaster (Fruit fly), this protein is Coiled-coil and C2 domain-containing protein 2A.